The primary structure comprises 273 residues: Small ribosomal subunit protein uS3 (273 aa).

The KH type-2 domain occupies 40–110 (IRNLFFVNYR…NLDLTINEIG (71 aa)). Positions 244–265 (QVLSANKLTGSDVETSSIQALT) are enriched in polar residues. Residues 244 to 273 (QVLSANKLTGSDVETSSIQALTKPNKEDKQ) form a disordered region.

Belongs to the universal ribosomal protein uS3 family. In terms of assembly, part of the 30S ribosomal subunit. Forms a tight complex with proteins S10 and S14.

Functionally, binds the lower part of the 30S subunit head. Binds mRNA in the 70S ribosome, positioning it for translation. This is Small ribosomal subunit protein uS3 from Mycoplasma pneumoniae (strain ATCC 29342 / M129 / Subtype 1) (Mycoplasmoides pneumoniae).